The chain runs to 334 residues: Ornithine carbamoyltransferase (334 aa).

Carbamoyl phosphate is bound by residues 57 to 60 (STRT), Q84, R108, and 135 to 138 (HPTQ). L-ornithine contacts are provided by residues N169, D233, and 237–238 (SM). Carbamoyl phosphate contacts are provided by residues 275-276 (CL) and R320.

Belongs to the aspartate/ornithine carbamoyltransferase superfamily. OTCase family.

The protein resides in the cytoplasm. The enzyme catalyses carbamoyl phosphate + L-ornithine = L-citrulline + phosphate + H(+). Its pathway is amino-acid biosynthesis; L-arginine biosynthesis; L-arginine from L-ornithine and carbamoyl phosphate: step 1/3. In terms of biological role, reversibly catalyzes the transfer of the carbamoyl group from carbamoyl phosphate (CP) to the N(epsilon) atom of ornithine (ORN) to produce L-citrulline. The chain is Ornithine carbamoyltransferase from Aliivibrio fischeri (strain ATCC 700601 / ES114) (Vibrio fischeri).